We begin with the raw amino-acid sequence, 380 residues long: cAMP-dependent protein kinase type I-alpha regulatory subunit (380 aa).

Met-1 carries the post-translational modification N-acetylmethionine. Ala-2 is subject to N-acetylalanine; in cAMP-dependent protein kinase type I-alpha regulatory subunit, N-terminally processed. Residues 2–135 (ASGTTASEEE…ALAKAIEKNV (134 aa)) form a dimerization and phosphorylation region. Residues Ser-3, Ser-76, and Ser-82 each carry the phosphoserine modification. Residues 64–96 (IQNLQKAGSRADSREDEISPPPPNPVVKGRRRR) form a disordered region. The Pseudophosphorylation motif signature appears at 95 to 99 (RRGAI). Ser-100 carries the phosphoserine modification. Residues 136 to 253 (LFSH…SKVS), Glu-201, Arg-210, 254 to 380 (ILES…SLSV), Glu-325, and Arg-334 each bind 3',5'-cyclic AMP. Ser-257 carries the phosphoserine modification.

It belongs to the cAMP-dependent kinase regulatory chain family. The inactive holoenzyme is composed of two regulatory chains and two catalytic chains. Activation by cAMP releases the two active catalytic monomers and the regulatory dimer. Interacts with PRKACA and PRKACB. PRKAR1A also interacts with RFC2; the complex may be involved in cell survival. Interacts with AKAP4. Interacts with RARA; the interaction occurs in the presence of cAMP or FSH and regulates RARA transcriptional activity. Interacts with the phosphorylated form of PJA2. Interacts with CBFA2T3. Interacts with PRKX; regulates this cAMP-dependent protein kinase. Interacts with smAKAP; this interaction may target PRKAR1A to the plasma membrane. Interacts with AICDA. The pseudophosphorylation site binds to the substrate-binding region of the catalytic chain, resulting in the inhibition of its activity. The physiological significance of the in vitro phosphorylation of a proximal serine is unclear. Four types of regulatory chains are found: I-alpha, I-beta, II-alpha, and II-beta. Their expression varies among tissues and is in some cases constitutive and in others inducible.

It localises to the cell membrane. Functionally, regulatory subunit of the cAMP-dependent protein kinases involved in cAMP signaling in cells. The chain is cAMP-dependent protein kinase type I-alpha regulatory subunit (PRKAR1A) from Bos taurus (Bovine).